The sequence spans 185 residues: Threonylcarbamoyl-AMP synthase (185 aa).

In terms of domain architecture, YrdC-like spans 4-185; sequence SWRVQQAAQN…IATGQVMRAG (182 aa).

This sequence belongs to the SUA5 family. TsaC subfamily.

It is found in the cytoplasm. It carries out the reaction L-threonine + hydrogencarbonate + ATP = L-threonylcarbamoyladenylate + diphosphate + H2O. Its function is as follows. Required for the formation of a threonylcarbamoyl group on adenosine at position 37 (t(6)A37) in tRNAs that read codons beginning with adenine. Catalyzes the conversion of L-threonine, HCO(3)(-)/CO(2) and ATP to give threonylcarbamoyl-AMP (TC-AMP) as the acyladenylate intermediate, with the release of diphosphate. The polypeptide is Threonylcarbamoyl-AMP synthase (Pseudomonas syringae pv. tomato (strain ATCC BAA-871 / DC3000)).